The chain runs to 350 residues: Histidinol-phosphate aminotransferase (350 aa).

Lys209 carries the N6-(pyridoxal phosphate)lysine modification.

The protein belongs to the class-II pyridoxal-phosphate-dependent aminotransferase family. Histidinol-phosphate aminotransferase subfamily. Homodimer. Pyridoxal 5'-phosphate is required as a cofactor.

The catalysed reaction is L-histidinol phosphate + 2-oxoglutarate = 3-(imidazol-4-yl)-2-oxopropyl phosphate + L-glutamate. It participates in amino-acid biosynthesis; L-histidine biosynthesis; L-histidine from 5-phospho-alpha-D-ribose 1-diphosphate: step 7/9. The sequence is that of Histidinol-phosphate aminotransferase from Citrifermentans bemidjiense (strain ATCC BAA-1014 / DSM 16622 / JCM 12645 / Bem) (Geobacter bemidjiensis).